Here is a 224-residue protein sequence, read N- to C-terminus: Ribonuclease HII (224 aa).

The RNase H type-2 domain maps to 1-219 (MMIAGIDEAG…VENIREELKK (219 aa)). Positions 7, 8, and 105 each coordinate a divalent metal cation.

It belongs to the RNase HII family. Mn(2+) is required as a cofactor. Requires Mg(2+) as cofactor.

It localises to the cytoplasm. It catalyses the reaction Endonucleolytic cleavage to 5'-phosphomonoester.. Endonuclease that specifically degrades the RNA of RNA-DNA hybrids. This is Ribonuclease HII from Methanosarcina barkeri (strain Fusaro / DSM 804).